The primary structure comprises 270 residues: GTP cyclohydrolase FolE2 2 (270 aa).

Belongs to the GTP cyclohydrolase IV family.

The enzyme catalyses GTP + H2O = 7,8-dihydroneopterin 3'-triphosphate + formate + H(+). Its pathway is cofactor biosynthesis; 7,8-dihydroneopterin triphosphate biosynthesis; 7,8-dihydroneopterin triphosphate from GTP: step 1/1. Converts GTP to 7,8-dihydroneopterin triphosphate. This is GTP cyclohydrolase FolE2 2 from Dechloromonas aromatica (strain RCB).